Reading from the N-terminus, the 214-residue chain is Ribonuclease S-2 (214 aa).

The signal sequence occupies residues 1-22 (MSKSQLTSVFFILLCALSPIYG). A disulfide bridge links C38 with C43. N49 is a glycosylation site (N-linked (GlcNAc...) asparagine). Residue H53 is the Proton donor of the active site. H53 contributes to the RNA binding site. N59 is a glycosylation site (N-linked (GlcNAc...) asparagine). A disulfide bond links C67 and C116. Residues 91–92 (DL), K94, and F105 each bind RNA. E109 is a catalytic residue. 112–113 (KH) contacts RNA. The active-site Proton acceptor is the H113. N160 carries an N-linked (GlcNAc...) asparagine glycan. 2 disulfide bridges follow: C175–C204 and C187–C198.

This sequence belongs to the RNase T2 family.

The protein resides in the secreted. The protein localises to the extracellular space. The enzyme catalyses a ribonucleotidyl-ribonucleotide-RNA + H2O = a 3'-end 3'-phospho-ribonucleotide-RNA + a 5'-end dephospho-ribonucleoside-RNA + H(+). In terms of biological role, self-incompatibility (SI) is the inherited ability of a flowering plant to prevent self-fertilization by discriminating between self and non-self pollen during pollination. In many species of the Solanaceae, self-incompatibility is controlled by the single, multiallelic locus S. This stylar glycoprotein is associated with expression of self-incompatibility in potato. The protein is Ribonuclease S-2 (S-2) of Nicotiana alata (Winged tobacco).